The following is a 38-amino-acid chain: Photosystem II reaction center protein L (38 aa).

A helical transmembrane segment spans residues 17–37 (SLYWGLLLIFVLAVLFSNYFF).

The protein belongs to the PsbL family. In terms of assembly, PSII is composed of 1 copy each of membrane proteins PsbA, PsbB, PsbC, PsbD, PsbE, PsbF, PsbH, PsbI, PsbJ, PsbK, PsbL, PsbM, PsbT, PsbX, PsbY, PsbZ, Psb30/Ycf12, at least 3 peripheral proteins of the oxygen-evolving complex and a large number of cofactors. It forms dimeric complexes.

It localises to the plastid. Its subcellular location is the chloroplast thylakoid membrane. Functionally, one of the components of the core complex of photosystem II (PSII). PSII is a light-driven water:plastoquinone oxidoreductase that uses light energy to abstract electrons from H(2)O, generating O(2) and a proton gradient subsequently used for ATP formation. It consists of a core antenna complex that captures photons, and an electron transfer chain that converts photonic excitation into a charge separation. This subunit is found at the monomer-monomer interface and is required for correct PSII assembly and/or dimerization. The protein is Photosystem II reaction center protein L of Antirrhinum majus (Garden snapdragon).